A 467-amino-acid chain; its full sequence is Transcriptional regulator of yeast form adherence 6 (467 aa).

Residues 43–52 (NTSDAGSIPT) are compositionally biased toward polar residues. Disordered regions lie at residues 43–83 (NTSD…NIDS), 128–149 (GSSG…NSNN), 245–275 (ESPE…SNSS), 312–365 (NNQL…SGSK), and 390–439 (STLN…DNDR). The 82-residue stretch at 92 to 173 (ETKQLHSIIE…KSSVEYILYL (82 aa)) folds into the bHLH domain. Composition is skewed to low complexity over residues 257 to 275 (VSET…SNSS) and 312 to 322 (NNQLNNRKNSN). Residues 323–338 (PISPQTVCIKSQNPSP) show a composition bias toward polar residues. Low complexity predominate over residues 345-365 (SSLSTSIVNSPSSSSSLSGSK). Residues 417 to 432 (GSANTETVNSGSASSD) are compositionally biased toward polar residues.

The protein localises to the nucleus. Functionally, transcription factor required for yeast cell adherence to silicone substrate. This is Transcriptional regulator of yeast form adherence 6 (TRY6) from Candida albicans (strain SC5314 / ATCC MYA-2876) (Yeast).